A 431-amino-acid polypeptide reads, in one-letter code: MVRSDSAEEDQIIIDDGFDLTEEDEEMMSSGTGALPVTIADWNSVTNARMAPPSIMSAASAFDLTASGMQNSLRSVLPTSTIGHAPMLANRSLSQPAPLSPTSLDPDRRSRMRRQIANCNERRRMQSINAGFLALRALLPRKEGEKLSKAAILQQTADMVHQLLGHKGEDIPDGGEPKKLKLEEDHHDADHQAQIAHLQTILETERAARKALESQVIQLRELLQMTTTSSQASSPVTPRSNGSGGFTLPSSYASSALPTPLRESPERKPSFQDTTSTPLSLLTLNGSPTSSESLASQRIFHPPPTLPSLETTVIRPTPLPPISVEISSPSLSTPSPLTAAPIIFSTAVPTQSSILFQTAAAAVTSAMSTGNSTPVALPHHLQGHNSAFVSTQPSLTLSQSMQTIVEAIRHLEGSHFIPTSPPPTSQTSLVR.

Residues 88-109 are disordered; the sequence is LANRSLSQPAPLSPTSLDPDRR. The segment covering 91-103 has biased composition (polar residues); it reads RSLSQPAPLSPTS. A bHLH domain is found at 112–163; that stretch reads MRRQIANCNERRRMQSINAGFLALRALLPRKEGEKLSKAAILQQTADMVHQL. Polar residues-rich tracts occupy residues 226-241 and 248-257; these read TTTS…PRSN and LPSSYASSAL. The tract at residues 226–311 is disordered; the sequence is TTTSSQASSP…PPPTLPSLET (86 aa). Low complexity predominate over residues 274 to 291; the sequence is TTSTPLSLLTLNGSPTSS.

In terms of tissue distribution, expressed in the pharynx, nerve cords, the H-shaped excretory cell, vulva muscles, and the anal depressor (at protein level). Expressed in the intestine (at protein level). In males, it is also expressed in the spicules and hyp7 cells of the hypodermis (at protein level).

Its subcellular location is the nucleus. Functionally, transcriptional regulator. Component of a feedback loop involving atfs-1, atgl-1 and hlh-11. Binds to the promoter of the atgl-1 lipase to negatively regulate the expression of atgl-1, and thereby promoting fat oxidation in response to mitochondrial stress and mitochondrial respiration in the intestine. In addition, functions with atfs-1 to maintain lifespan. May have a role in fertility and in positively regulating body size. This chain is Helix-loop-helix protein 11, found in Caenorhabditis elegans.